The chain runs to 316 residues: Pantothenate kinase (316 aa).

Residue 95 to 102 (GSVAVGKS) coordinates ATP.

It belongs to the prokaryotic pantothenate kinase family.

It localises to the cytoplasm. It carries out the reaction (R)-pantothenate + ATP = (R)-4'-phosphopantothenate + ADP + H(+). It functions in the pathway cofactor biosynthesis; coenzyme A biosynthesis; CoA from (R)-pantothenate: step 1/5. This is Pantothenate kinase from Salmonella agona (strain SL483).